A 183-amino-acid chain; its full sequence is Large ribosomal subunit protein uL10 (183 aa).

It belongs to the universal ribosomal protein uL10 family. In terms of assembly, part of the ribosomal stalk of the 50S ribosomal subunit. The N-terminus interacts with L11 and the large rRNA to form the base of the stalk. The C-terminus forms an elongated spine to which L12 dimers bind in a sequential fashion forming a multimeric L10(L12)X complex.

Functionally, forms part of the ribosomal stalk, playing a central role in the interaction of the ribosome with GTP-bound translation factors. This is Large ribosomal subunit protein uL10 from Mesomycoplasma hyopneumoniae (strain 7448) (Mycoplasma hyopneumoniae).